Here is a 247-residue protein sequence, read N- to C-terminus: MTRLWASLLTVIIYILSQFLPLLIVKKLPFVQYSGIELTKAVIYIQLVLFLIAATTIILINLKIKNPTKLELEVKEPKKYIIPWALLGFALVMIYQMVVSIVLTQIYGGQQVSPNTEKLIIIARKIPIFIFFVSIIGPLLEEYVFRKVIFGELFNAIKGNRIVAFIIATTVSSLIFALAHNDFKFIPVYFGMGVIFSLAYVWTKRLAVPIIIHMLQNGFVVIFQLLNPEALKKATEQANFIYHIFIP.

The signal sequence occupies residues 1-17 (MTRLWASLLTVIIYILS). 3 helical membrane-spanning segments follow: residues 42–62 (VIYI…LINL), 81–101 (IIPW…VVSI), and 119–139 (LIII…IGPL). Glu-141 is a catalytic residue. A run of 2 helical transmembrane segments spans residues 162–182 (IVAF…AHND) and 183–203 (FKFI…YVWT).

It belongs to the peptidase U48 family.

It is found in the membrane. Functionally, participates in the regulation of the Agr quorum sensing activity and plays thereby an important role in virulence. Mechanistically, elicits a protease dependent control of Agr activity without playing a role in the processing of the pheromone-precursor AgrD. The chain is Membrane-embedded CAAX protease MroQ (mroQ) from Staphylococcus aureus (strain USA300).